The primary structure comprises 469 residues: Cold shock protein CS66 (469 aa).

21 consecutive repeat copies span residues 9-31 (GEKKGIMEKIKEKLPGGHGDHKE), 49-62 (TGGAYGQEGHTGTT), 72-94 (GEKKGVMENIKDKLPGGHADHQQ), 95-108 (TGGTYGQQGHTGTA), 115-128 (TGGTYGQQGHTGTA), 135-148 (TNGTYGEHGHTGTA), 149-162 (TGGSYGEQRHTGVT), 170-192 (GEKKSLMENIKEKLPGGHGDNQQ), 193-206 (TAGTYGQQGHFATG), 213-226 (TGGTYGEQGHAGVT), 234-256 (GEKKGLMENIKDKLPGGHGDHQQ), 257-270 (TGGTYGQQGHTGAA), 277-290 (GGGTYEQHGHTGMT), 298-320 (GGKKGVMENIKDKLPGGHSDNQQ), 321-334 (TGGAYEQQGHTGAA), 341-354 (SGGTYEQHGHTGMT), 362-384 (GEKKAVMENIKDKLPGGHGDHQQ), 385-398 (TGGAYGQQGHTGTA), 405-418 (GGGTYEQHGNTGMT), 428-441 (TGGTHGQHGHTGTT), and 452-469 (GEKKSLMDKIKDKLPGQH). Residues 9–390 (GEKKGIMEKI…DHQQTGGAYG (382 aa)) form a 7 X 23 AA approximate repeats region. Residues 49–441 (TGGAYGQEGH…HGQHGHTGTT (393 aa)) form a 14 X 14 AA approximate repeats region. Positions 87–112 (GGHADHQQTGGTYGQQGHTGTATHGT) are disordered. The segment covering 93–112 (QQTGGTYGQQGHTGTATHGT) has biased composition (low complexity). Low complexity predominate over residues 203-214 (FATGTHGTPATG). The segment at 203–469 (FATGTHGTPA…KIKDKLPGQH (267 aa)) is disordered. A compositionally biased stretch (basic and acidic residues) spans 233-254 (TGEKKGLMENIKDKLPGGHGDH). Low complexity predominate over residues 255–274 (QQTGGTYGQQGHTGAATHGT). Gly residues predominate over residues 288–301 (GMTGTGTHGTGGKK). The span at 302–312 (GVMENIKDKLP) shows a compositional bias: basic and acidic residues. Residues 361 to 382 (TGEKKAVMENIKDKLPGGHGDH) are compositionally biased toward basic and acidic residues. Composition is skewed to low complexity over residues 383–402 (QQTGGAYGQQGHTGTATHGT) and 412–429 (HGNTGMTGTETHGTTATG). Positions 439 to 450 (GTTGTGTHGTDG) are enriched in gly residues. Residues 451–469 (VGEKKSLMDKIKDKLPGQH) show a composition bias toward basic and acidic residues.

The protein belongs to the plant dehydrin family.

Its function is as follows. May reduce intracellular freezing damage during winter by hydrogen-bonding to the lattice of the nascent ice crystals, thus modifying the structure and/or propagation of ice crystals. The polypeptide is Cold shock protein CS66 (CS66) (Triticum aestivum (Wheat)).